Reading from the N-terminus, the 159-residue chain is MATNKEVVLTYEGLQKLEQELENLKTVKRREVAERIKQALSFGDISENSEYDEAKNEQAYIEGRIFQLENMLKNAKVIDEEDIQTDVVSIGSKVKVLDMEFDEEVEYYIVGSTEADPSQYKISNESPVGKALIGGKIGDIVEVTVPDGVIKFKILEIRK.

Positions threonine 3–lysine 37 form a coiled coil.

Belongs to the GreA/GreB family.

Functionally, necessary for efficient RNA polymerase transcription elongation past template-encoded arresting sites. The arresting sites in DNA have the property of trapping a certain fraction of elongating RNA polymerases that pass through, resulting in locked ternary complexes. Cleavage of the nascent transcript by cleavage factors such as GreA or GreB allows the resumption of elongation from the new 3'terminus. GreA releases sequences of 2 to 3 nucleotides. The chain is Transcription elongation factor GreA from Acetivibrio thermocellus (strain ATCC 27405 / DSM 1237 / JCM 9322 / NBRC 103400 / NCIMB 10682 / NRRL B-4536 / VPI 7372) (Clostridium thermocellum).